The following is a 188-amino-acid chain: Ribosome maturation factor RimM (188 aa).

Positions 93 to 175 constitute a PRC barrel domain; the sequence is QDEFYFTDLI…EIEVQGDLSD (83 aa).

Belongs to the RimM family. As to quaternary structure, binds ribosomal protein uS19.

It is found in the cytoplasm. An accessory protein needed during the final step in the assembly of 30S ribosomal subunit, possibly for assembly of the head region. Essential for efficient processing of 16S rRNA. May be needed both before and after RbfA during the maturation of 16S rRNA. It has affinity for free ribosomal 30S subunits but not for 70S ribosomes. This Gluconacetobacter diazotrophicus (strain ATCC 49037 / DSM 5601 / CCUG 37298 / CIP 103539 / LMG 7603 / PAl5) protein is Ribosome maturation factor RimM.